Consider the following 391-residue polypeptide: Formate-dependent phosphoribosylglycinamide formyltransferase (391 aa).

N(1)-(5-phospho-beta-D-ribosyl)glycinamide is bound by residues 20–21 (EL) and Glu80. Residues Arg112, Lys153, 158 to 163 (SSGKGQ), 193 to 196 (EGFV), and Glu201 contribute to the ATP site. In terms of domain architecture, ATP-grasp spans 117-306 (RLAAETLGLP…EFALHVRAIL (190 aa)). Mg(2+) is bound by residues Glu265 and Glu277. Residues Asp284, Lys354, and 361–362 (RR) contribute to the N(1)-(5-phospho-beta-D-ribosyl)glycinamide site.

The protein belongs to the PurK/PurT family. As to quaternary structure, homodimer.

The enzyme catalyses N(1)-(5-phospho-beta-D-ribosyl)glycinamide + formate + ATP = N(2)-formyl-N(1)-(5-phospho-beta-D-ribosyl)glycinamide + ADP + phosphate + H(+). It functions in the pathway purine metabolism; IMP biosynthesis via de novo pathway; N(2)-formyl-N(1)-(5-phospho-D-ribosyl)glycinamide from N(1)-(5-phospho-D-ribosyl)glycinamide (formate route): step 1/1. Its function is as follows. Involved in the de novo purine biosynthesis. Catalyzes the transfer of formate to 5-phospho-ribosyl-glycinamide (GAR), producing 5-phospho-ribosyl-N-formylglycinamide (FGAR). Formate is provided by PurU via hydrolysis of 10-formyl-tetrahydrofolate. The protein is Formate-dependent phosphoribosylglycinamide formyltransferase of Shewanella sp. (strain W3-18-1).